Reading from the N-terminus, the 568-residue chain is Cyclin-dependent kinase-like 2 (568 aa).

The Protein kinase domain occupies 4 to 289; it reads YENLGLVGEG…CADLLRHDFF (286 aa). Residues 10 to 18 and K33 each bind ATP; that span reads VGEGSYGMV. The short motif at 45 to 51 is the [NKR]KIAxRE element; it reads KKIAMRE. The Proton acceptor role is filled by D126. Disordered stretches follow at residues 309–333 and 545–568; these read DARN…LGEE and SHQG…EHQH. Residues 322-333 show a composition bias toward basic and acidic residues; the sequence is RKKEKDDALGEE.

This sequence belongs to the protein kinase superfamily. CMGC Ser/Thr protein kinase family. CDC2/CDKX subfamily. Expressed in testis, kidney, lung and brain.

It is found in the cytoplasm. It localises to the nucleus. It carries out the reaction L-seryl-[protein] + ATP = O-phospho-L-seryl-[protein] + ADP + H(+). The enzyme catalyses L-threonyl-[protein] + ATP = O-phospho-L-threonyl-[protein] + ADP + H(+). This is Cyclin-dependent kinase-like 2 from Mus musculus (Mouse).